Here is a 267-residue protein sequence, read N- to C-terminus: Short-chain dehydrogenase/reductase GME11361 (267 aa).

9 residues coordinate NADP(+): Ile-10, Thr-36, Lys-42, Asp-57, Asn-80, Tyr-129, Lys-133, Val-162, and Ser-164. Tyr-129 (proton acceptor) is an active-site residue. The active-site Lowers pKa of active site Tyr is Lys-133.

Belongs to the short-chain dehydrogenases/reductases (SDR) family.

It functions in the pathway secondary metabolite biosynthesis. In terms of biological role, short-chain dehydrogenase/reductase; part of the gene cluster that mediates the biosynthesis of dibenzodioxocinones such as pestalotiollide B, a novel class of inhibitors against cholesterol ester transfer protein (CEPT). The biosynthesis initiates from condensation of acetate and malonate units catalyzed by the non-reducing PKS pks8/GME11356. Pks8/GME11356 lacks a thioesterase (TE) domain, which is important to the cyclizing of the third ring of atrochrysone carboxylic acid, and the esterase GME11355 might play the role of TE and catalyzes the cyclization reaction of the C ring. The lactamase-like protein GME11357 (or other beta-lactamases in Pestalotiopsis microspora) probably hydrolyzes the thioester bond between the ACP of pks8/GME11356 and the intermediate to release atrochrysone carboxylic acid, which is spontaneously dehydrates to form endocrocin anthrone. Endocrocin anthrone is further converted to emodin via the endocrocin intermediate. Emodin is then oxidized by several enzymes such as the Baeyer-Villiger oxidase GME11358, the oxidoreductase GME11367, the short chain dehydrogenase/reductase GME11373, as well as by other oxidoreductases from the cluster, to modify the A and C rings and open the B ring, and finally yield monodictyphenone. The prenyltransferase GME11375 may catalyze the addition reaction between the C5 side chains and the carbon bone of dibenzodioxocinones. The remaining biochemical reactions to the final product dibenzodioxocinones should be methylation catalyzed by methyltransferase GME11366 and reduction and lactonization reaction catalyzed by a series of oxidordeuctases. This Pestalotiopsis microspora protein is Short-chain dehydrogenase/reductase GME11361.